The following is a 118-amino-acid chain: Basic phospholipase A2 PA-9C (118 aa).

Intrachain disulfides connect C11–C71, C27–C117, C29–C45, C44–C98, C51–C91, C60–C84, and C78–C89. Ca(2+) contacts are provided by Y28, G30, and G32. Residue H48 is part of the active site. Position 49 (D49) interacts with Ca(2+). Residue D92 is part of the active site.

The protein belongs to the phospholipase A2 family. Group I subfamily. D49 sub-subfamily. Ca(2+) is required as a cofactor. As to expression, expressed by the venom gland.

Its subcellular location is the secreted. It carries out the reaction a 1,2-diacyl-sn-glycero-3-phosphocholine + H2O = a 1-acyl-sn-glycero-3-phosphocholine + a fatty acid + H(+). In terms of biological role, PLA2 catalyzes the calcium-dependent hydrolysis of the 2-acyl groups in 3-sn-phosphoglycerides. The chain is Basic phospholipase A2 PA-9C from Pseudechis australis (Mulga snake).